A 172-amino-acid chain; its full sequence is Shikimate kinase (172 aa).

An ATP-binding site is contributed by 11 to 16; that stretch reads GAGKST. Serine 15 contributes to the Mg(2+) binding site. 3 residues coordinate substrate: aspartate 33, arginine 57, and glycine 79. Arginine 117 serves as a coordination point for ATP. Arginine 136 provides a ligand contact to substrate. Arginine 153 serves as a coordination point for ATP.

Belongs to the shikimate kinase family. As to quaternary structure, monomer. It depends on Mg(2+) as a cofactor.

Its subcellular location is the cytoplasm. The catalysed reaction is shikimate + ATP = 3-phosphoshikimate + ADP + H(+). It participates in metabolic intermediate biosynthesis; chorismate biosynthesis; chorismate from D-erythrose 4-phosphate and phosphoenolpyruvate: step 5/7. Catalyzes the specific phosphorylation of the 3-hydroxyl group of shikimic acid using ATP as a cosubstrate. In Pseudomonas syringae pv. tomato (strain ATCC BAA-871 / DC3000), this protein is Shikimate kinase.